The primary structure comprises 142 residues: Hemoglobin subunit alpha-1 (142 aa).

At Ser-1 the chain carries N-acetylserine. The region spanning 1–142 is the Globin domain; that stretch reads SLSDKDKAAV…VALALAQRYR (142 aa). His-59 is an O2 binding site. His-88 serves as a coordination point for heme b.

Belongs to the globin family. In terms of assembly, hb1 is a heterotetramer of two alpha-2 chains and two beta chains. Red blood cells.

Involved in oxygen transport from gills to the various peripheral tissues. In Notothenia neglecta (Yellowbelly rockcod), this protein is Hemoglobin subunit alpha-1 (hba1).